A 192-amino-acid chain; its full sequence is Erythropoietin (192 aa).

Positions 1–26 (MGVPDCLALPLLVTFLLLSLGLPVLG) are cleaved as a signal peptide. Cysteines 33 and 187 form a disulfide. N-linked (GlcNAc...) asparagine glycosylation is found at asparagine 50, asparagine 64, and asparagine 109.

The protein belongs to the EPO/TPO family.

It localises to the secreted. Its function is as follows. Hormone involved in the regulation of erythrocyte proliferation and differentiation and the maintenance of a physiological level of circulating erythrocyte mass. Binds to EPOR leading to EPOR dimerization and JAK2 activation thereby activating specific downstream effectors, including STAT1 and STAT3. The sequence is that of Erythropoietin (EPO) from Nannospalax galili (Northern Israeli blind subterranean mole rat).